Consider the following 158-residue polypeptide: Leptin-B (158 aa).

The N-terminal stretch at 1-19 is a signal peptide; the sequence is MYMPLALVYASFLTLPAST. Residues Cys-114 and Cys-158 are joined by a disulfide bond.

Belongs to the leptin family. In terms of tissue distribution, highly expressed in the brain and eye. Expressed at low levels in muscle and skin.

The protein localises to the secreted. In terms of biological role, may function as part of a signaling pathway that acts to regulate the size of the body fat depot. The protein is Leptin-B of Oryzias latipes (Japanese rice fish).